Consider the following 330-residue polypeptide: Aspartate--ammonia ligase (330 aa).

This sequence belongs to the class-II aminoacyl-tRNA synthetase family. AsnA subfamily.

The protein resides in the cytoplasm. The catalysed reaction is L-aspartate + NH4(+) + ATP = L-asparagine + AMP + diphosphate + H(+). It participates in amino-acid biosynthesis; L-asparagine biosynthesis; L-asparagine from L-aspartate (ammonia route): step 1/1. In Salmonella paratyphi A (strain ATCC 9150 / SARB42), this protein is Aspartate--ammonia ligase.